Consider the following 154-residue polypeptide: uncharacterized protein (154 aa).

Gly-12–Thr-19 provides a ligand contact to GTP. A G domain is found at Gly-17 to Lys-112.

The protein to M.thermoautotrophicum MTH765.

This is an uncharacterized protein from Methanocaldococcus jannaschii (strain ATCC 43067 / DSM 2661 / JAL-1 / JCM 10045 / NBRC 100440) (Methanococcus jannaschii).